The primary structure comprises 737 residues: Translation initiation factor IF-2 (737 aa).

Positions 69–80 (EKKEEKPIRKIM) are enriched in basic and acidic residues. A disordered region spans residues 69-130 (EKKEEKPIRK…HKNKGKKKKG (62 aa)). Composition is skewed to basic residues over residues 95–108 (NNKKAKFQQTKNKK) and 121–130 (HKNKGKKKKG). In terms of domain architecture, tr-type G spans 237 to 404 (ERPPVITIMG…TILITAEILE (168 aa)). Positions 246-253 (GHVDHGKT) are G1. GTP is bound at residue 246-253 (GHVDHGKT). Residues 271–275 (GITQK) form a G2 region. The G3 stretch occupies residues 292–295 (DTPG). GTP is bound by residues 292 to 296 (DTPGH) and 346 to 349 (NKID). Residues 346–349 (NKID) form a G4 region. The tract at residues 382–384 (SAK) is G5.

The protein belongs to the TRAFAC class translation factor GTPase superfamily. Classic translation factor GTPase family. IF-2 subfamily.

It is found in the cytoplasm. Its function is as follows. One of the essential components for the initiation of protein synthesis. Protects formylmethionyl-tRNA from spontaneous hydrolysis and promotes its binding to the 30S ribosomal subunits. Also involved in the hydrolysis of GTP during the formation of the 70S ribosomal complex. This chain is Translation initiation factor IF-2, found in Fusobacterium nucleatum subsp. nucleatum (strain ATCC 25586 / DSM 15643 / BCRC 10681 / CIP 101130 / JCM 8532 / KCTC 2640 / LMG 13131 / VPI 4355).